Consider the following 152-residue polypeptide: MTQKITVSIRHLPHGEGLPLPEYQTAHAAGLDLIAAVPQDAPLTLQPGRYVLVPTGLTIALPENYEAQVRPRSGLAAKHGVTVLNAPGTIDADYRGEIGVLLINHGTEPFAIRRGERIAQMVIAPVSRAQFVAVEALPESGRGAGGFGSTGR.

Residues 72 to 74 (RSG), asparagine 85, and 89 to 91 (TID) each bind substrate.

Belongs to the dUTPase family. It depends on Mg(2+) as a cofactor.

It carries out the reaction dUTP + H2O = dUMP + diphosphate + H(+). Its pathway is pyrimidine metabolism; dUMP biosynthesis; dUMP from dCTP (dUTP route): step 2/2. Its function is as follows. This enzyme is involved in nucleotide metabolism: it produces dUMP, the immediate precursor of thymidine nucleotides and it decreases the intracellular concentration of dUTP so that uracil cannot be incorporated into DNA. The chain is Deoxyuridine 5'-triphosphate nucleotidohydrolase from Rhodopseudomonas palustris (strain ATCC BAA-98 / CGA009).